A 407-amino-acid chain; its full sequence is Bifunctional enzyme IspD/IspF (407 aa).

The tract at residues 1–246 (MTEASENASA…SSERTHFPDI (246 aa)) is 2-C-methyl-D-erythritol 4-phosphate cytidylyltransferase. The tract at residues 247 to 407 (RTGNGYDVHA…SVVFPGEVPE (161 aa)) is 2-C-methyl-D-erythritol 2,4-cyclodiphosphate synthase. Asp253 and His255 together coordinate a divalent metal cation. Residues 253 to 255 (DVH) and 279 to 280 (HS) contribute to the 4-CDP-2-C-methyl-D-erythritol 2-phosphate site. His287 lines the a divalent metal cation pocket. Residues 301–303 (DIG), 377–380 (TTNE), Phe384, and Arg387 each bind 4-CDP-2-C-methyl-D-erythritol 2-phosphate.

The protein in the N-terminal section; belongs to the IspD/TarI cytidylyltransferase family. IspD subfamily. This sequence in the C-terminal section; belongs to the IspF family. A divalent metal cation serves as cofactor.

It catalyses the reaction 2-C-methyl-D-erythritol 4-phosphate + CTP + H(+) = 4-CDP-2-C-methyl-D-erythritol + diphosphate. The catalysed reaction is 4-CDP-2-C-methyl-D-erythritol 2-phosphate = 2-C-methyl-D-erythritol 2,4-cyclic diphosphate + CMP. The protein operates within isoprenoid biosynthesis; isopentenyl diphosphate biosynthesis via DXP pathway; isopentenyl diphosphate from 1-deoxy-D-xylulose 5-phosphate: step 2/6. It participates in isoprenoid biosynthesis; isopentenyl diphosphate biosynthesis via DXP pathway; isopentenyl diphosphate from 1-deoxy-D-xylulose 5-phosphate: step 4/6. Its function is as follows. Bifunctional enzyme that catalyzes the formation of 4-diphosphocytidyl-2-C-methyl-D-erythritol from CTP and 2-C-methyl-D-erythritol 4-phosphate (MEP) (IspD), and catalyzes the conversion of 4-diphosphocytidyl-2-C-methyl-D-erythritol 2-phosphate (CDP-ME2P) to 2-C-methyl-D-erythritol 2,4-cyclodiphosphate (ME-CPP) with a corresponding release of cytidine 5-monophosphate (CMP) (IspF). In Mesorhizobium japonicum (strain LMG 29417 / CECT 9101 / MAFF 303099) (Mesorhizobium loti (strain MAFF 303099)), this protein is Bifunctional enzyme IspD/IspF.